Here is a 374-residue protein sequence, read N- to C-terminus: N5-carboxyaminoimidazole ribonucleotide synthase (374 aa).

ATP is bound by residues R108, K148, 153-159 (GYDGKGQ), 183-186 (EKYL), E191, H214, and 266-267 (NE). An ATP-grasp domain is found at 112–296 (KETLKSAGTK…QFDTHILAVT (185 aa)).

Belongs to the PurK/PurT family. As to quaternary structure, homodimer.

It catalyses the reaction 5-amino-1-(5-phospho-beta-D-ribosyl)imidazole + hydrogencarbonate + ATP = 5-carboxyamino-1-(5-phospho-D-ribosyl)imidazole + ADP + phosphate + 2 H(+). It participates in purine metabolism; IMP biosynthesis via de novo pathway; 5-amino-1-(5-phospho-D-ribosyl)imidazole-4-carboxylate from 5-amino-1-(5-phospho-D-ribosyl)imidazole (N5-CAIR route): step 1/2. Catalyzes the ATP-dependent conversion of 5-aminoimidazole ribonucleotide (AIR) and HCO(3)(-) to N5-carboxyaminoimidazole ribonucleotide (N5-CAIR). The polypeptide is N5-carboxyaminoimidazole ribonucleotide synthase (Staphylococcus aureus (strain COL)).